The following is a 74-amino-acid chain: Homeobox protein Hox-B8 (74 aa).

The segment covering 1–24 (YTDCKLAASGLGEEAESSEQSPSP) has biased composition (low complexity). The interval 1–28 (YTDCKLAASGLGEEAESSEQSPSPTQLF) is disordered. Positions 27–32 (LFPWMR) match the Antp-type hexapeptide motif. The homeobox DNA-binding region spans 39 to 74 (RRRGRQTYSRYQTLELEKEFLFNPYLTRKRRIEVSR).

Belongs to the Antp homeobox family.

Its subcellular location is the nucleus. In terms of biological role, sequence-specific transcription factor which is part of a developmental regulatory system that provides cells with specific positional identities on the anterior-posterior axis. The protein is Homeobox protein Hox-B8 (HOXB8) of Gallus gallus (Chicken).